Reading from the N-terminus, the 531-residue chain is Acetate CoA-transferase YdiF (531 aa).

Glu333 functions as the 5-glutamyl coenzyme A thioester intermediate in the catalytic mechanism.

This sequence belongs to the 3-oxoacid CoA-transferase family. Homotetramer; dimer of dimers.

It carries out the reaction an acyl-CoA + acetate = a carboxylate + acetyl-CoA. CoA transferase having broad substrate specificity for short-chain acyl-CoA thioesters with the activity decreasing when the length of the carboxylic acid chain exceeds four carbons. May play a role in short-chain fatty acid metabolism in E.coli. This chain is Acetate CoA-transferase YdiF (ydiF), found in Escherichia coli (strain K12).